Consider the following 265-residue polypeptide: Thymidylate synthase (265 aa).

Arg-21 is a binding site for dUMP. His-51 is a binding site for (6R)-5,10-methylene-5,6,7,8-tetrahydrofolate. 127 to 128 is a binding site for dUMP; the sequence is RR. The active-site Nucleophile is the Cys-147. Residues 167 to 170, Asn-178, and 208 to 210 contribute to the dUMP site; these read RSAD and HLY. A (6R)-5,10-methylene-5,6,7,8-tetrahydrofolate-binding site is contributed by Asp-170. Position 264 (Ser-264) interacts with (6R)-5,10-methylene-5,6,7,8-tetrahydrofolate.

Belongs to the thymidylate synthase family. Bacterial-type ThyA subfamily. Homodimer.

It localises to the cytoplasm. The catalysed reaction is dUMP + (6R)-5,10-methylene-5,6,7,8-tetrahydrofolate = 7,8-dihydrofolate + dTMP. It functions in the pathway pyrimidine metabolism; dTTP biosynthesis. Its function is as follows. Catalyzes the reductive methylation of 2'-deoxyuridine-5'-monophosphate (dUMP) to 2'-deoxythymidine-5'-monophosphate (dTMP) while utilizing 5,10-methylenetetrahydrofolate (mTHF) as the methyl donor and reductant in the reaction, yielding dihydrofolate (DHF) as a by-product. This enzymatic reaction provides an intracellular de novo source of dTMP, an essential precursor for DNA biosynthesis. The sequence is that of Thymidylate synthase from Neisseria gonorrhoeae.